A 197-amino-acid chain; its full sequence is Endonuclease V (197 aa).

Mg(2+)-binding residues include Asp-37 and Glu-101.

The protein belongs to the endonuclease V family. Mg(2+) is required as a cofactor.

It is found in the cytoplasm. It carries out the reaction Endonucleolytic cleavage at apurinic or apyrimidinic sites to products with a 5'-phosphate.. Its function is as follows. DNA repair enzyme involved in the repair of deaminated bases. Selectively cleaves double-stranded DNA at the second phosphodiester bond 3' to a deoxyinosine leaving behind the intact lesion on the nicked DNA. This chain is Endonuclease V, found in Thermococcus kodakarensis (strain ATCC BAA-918 / JCM 12380 / KOD1) (Pyrococcus kodakaraensis (strain KOD1)).